Reading from the N-terminus, the 399-residue chain is Elongation factor Tu (399 aa).

In terms of domain architecture, tr-type G spans Lys-10–Thr-209. The G1 stretch occupies residues Gly-19–Thr-26. Position 19–26 (Gly-19–Thr-26) interacts with GTP. Position 26 (Thr-26) interacts with Mg(2+). Residues Gly-60–Ala-64 are G2. The tract at residues Asp-81–Gly-84 is G3. GTP contacts are provided by residues Asp-81–His-85 and Asn-136–Asp-139. The tract at residues Asn-136 to Asp-139 is G4. Positions Ser-174–Lys-176 are G5.

It belongs to the TRAFAC class translation factor GTPase superfamily. Classic translation factor GTPase family. EF-Tu/EF-1A subfamily. Monomer.

It localises to the cytoplasm. It catalyses the reaction GTP + H2O = GDP + phosphate + H(+). Its function is as follows. GTP hydrolase that promotes the GTP-dependent binding of aminoacyl-tRNA to the A-site of ribosomes during protein biosynthesis. The polypeptide is Elongation factor Tu (Sulfurimonas denitrificans (strain ATCC 33889 / DSM 1251) (Thiomicrospira denitrificans (strain ATCC 33889 / DSM 1251))).